Consider the following 739-residue polypeptide: Long-chain-fatty-acid--CoA ligase ACSBG2 (739 aa).

ATP-binding positions include 287–295 (TSGTTGQPK), 478–483 (ELYGMS), Asp-556, Arg-571, and Lys-684.

This sequence belongs to the ATP-dependent AMP-binding enzyme family. Bubblegum subfamily.

The protein resides in the cytoplasm. It catalyses the reaction a long-chain fatty acid + ATP + CoA = a long-chain fatty acyl-CoA + AMP + diphosphate. It carries out the reaction (5Z,8Z,11Z,14Z)-eicosatetraenoate + ATP + CoA = (5Z,8Z,11Z,14Z)-eicosatetraenoyl-CoA + AMP + diphosphate. The catalysed reaction is hexadecanoate + ATP + CoA = hexadecanoyl-CoA + AMP + diphosphate. The enzyme catalyses (9Z)-octadecenoate + ATP + CoA = (9Z)-octadecenoyl-CoA + AMP + diphosphate. It catalyses the reaction (9Z,12Z)-octadecadienoate + ATP + CoA = (9Z,12Z)-octadecadienoyl-CoA + AMP + diphosphate. It carries out the reaction tetracosanoate + ATP + CoA = tetracosanoyl-CoA + AMP + diphosphate. Catalyzes the conversion of fatty acids such as long chain and very long-chain fatty acids to their active form acyl-CoAs for both synthesis of cellular lipids, and degradation via beta-oxidation. Can activate diverse saturated, monosaturated and polyunsaturated fatty acids. The protein is Long-chain-fatty-acid--CoA ligase ACSBG2 of Xenopus laevis (African clawed frog).